A 499-amino-acid polypeptide reads, in one-letter code: Maturase K (499 aa).

The protein belongs to the intron maturase 2 family. MatK subfamily.

Its subcellular location is the plastid. The protein resides in the chloroplast. In terms of biological role, usually encoded in the trnK tRNA gene intron. Probably assists in splicing its own and other chloroplast group II introns. The polypeptide is Maturase K (Chamaecrista fasciculata (Showy partridge pea)).